Reading from the N-terminus, the 339-residue chain is DNA-directed RNA polymerase RPB7 homolog (339 aa).

This sequence belongs to the asfivirus D339L family. As to quaternary structure, part of the viral DNA-directed RNA polymerase that consists of 8 polII-like subunits (RPB1, RPB2, RPB3, RPB5, RPB6, RPB7, RPB9, RPB10), a capping enzyme and a termination factor.

Its subcellular location is the host cytoplasm. The protein resides in the virion. Functionally, component of the DNA-directed RNA polymerase (RNAP) that catalyzes the transcription in the cytoplasm of viral DNA into RNA using the four ribonucleoside triphosphates as substrates. In Ornithodoros (relapsing fever ticks), this protein is DNA-directed RNA polymerase RPB7 homolog.